A 326-amino-acid chain; its full sequence is MTTTLTAPTPAAAEAPRKKWTVAEVQALFDLPFLDLVFQAQQVHRAHFAANEVQRSTLLSIKTGGCSEDCGYCSQSARYDTGLERERLLPLDEVLEHARAAKAKGSSRFCMGAAWRGPKDKDMAPVLEMVREVKKLGLETCVTLGMLKEGQAEQLAEAGLDYYNHNIDTAPEFYGQIVTTHTLQDRLDTLDKVRDAGINVCCGGIVGMGETQTSRAGLIAQLANMTPPPDSVPINNLVAIPGTPLADGGTIDGFDFVRTIAAARITMPTSYVRLSAGRQQMSDEMQALCFMAGANSIFYGERLLTTDNPESDRDDVLFARLGLRSV.

Residues 51–278 form the Radical SAM core domain; that stretch reads NEVQRSTLLS…TSYVRLSAGR (228 aa). Residues cysteine 66, cysteine 70, and cysteine 73 each coordinate [4Fe-4S] cluster. Positions 110, 141, 201, and 273 each coordinate [2Fe-2S] cluster.

This sequence belongs to the radical SAM superfamily. Biotin synthase family. Homodimer. The cofactor is [4Fe-4S] cluster. It depends on [2Fe-2S] cluster as a cofactor.

It catalyses the reaction (4R,5S)-dethiobiotin + (sulfur carrier)-SH + 2 reduced [2Fe-2S]-[ferredoxin] + 2 S-adenosyl-L-methionine = (sulfur carrier)-H + biotin + 2 5'-deoxyadenosine + 2 L-methionine + 2 oxidized [2Fe-2S]-[ferredoxin]. It functions in the pathway cofactor biosynthesis; biotin biosynthesis; biotin from 7,8-diaminononanoate: step 2/2. Its function is as follows. Catalyzes the conversion of dethiobiotin (DTB) to biotin by the insertion of a sulfur atom into dethiobiotin via a radical-based mechanism. The polypeptide is Biotin synthase (Azoarcus sp. (strain BH72)).